The chain runs to 157 residues: DNA gyrase inhibitor (157 aa).

This sequence belongs to the DNA gyrase inhibitor family. Interacts with DNA gyrase.

It is found in the cytoplasm. Its function is as follows. Inhibits the supercoiling activity of DNA gyrase. Acts by inhibiting DNA gyrase at an early step, prior to (or at the step of) binding of DNA by the gyrase. It protects cells against toxins that target DNA gyrase, by inhibiting activity of these toxins and reducing the formation of lethal double-strand breaks in the cell. The polypeptide is DNA gyrase inhibitor (Cronobacter turicensis (strain DSM 18703 / CCUG 55852 / LMG 23827 / z3032)).